We begin with the raw amino-acid sequence, 682 residues long: MSRKQLALFEPVLLVQALTDAVKKLSPRAQWRNPVMFVVWAGSVLTTLLTLAMVTGQIAGSALFTGIISLWLWFTVLFANFAEALAEGRSKAQANSLKGVKKTAFARRLRAPRHDAQADNVPAAELRKGDIVLVKAGDIIPCDGEVIEGGASVDESAITGESAPVIRESGGDFASVTGGTRILSDWLVIACSVNPGETFLDRMIAMVEGAQRRKTPNEIALTILLIALTIVFLLATATLWPFSAWGGNAVSVTVLVALLVCLIPTTIGGLLSAIGVAGMSRMLGANVIATSGRAVEAAGDVDVLLLDKTGTITLGNRQASDFIPARGVDERTLADAAQLASLADETPEGRSIVILAKQRFNLRERDVQSLHATFVPFTAQSRMSGINIDNRMIRKGSVDAIRRHVESNGGHFPADVEQNVENVARLGATPLVVVEGARVLGVIALKDIVKGGIKERFAQLRKMGIKTVMITGDNRLTAAAIAAEAGVDDFLAEATPEAKLALIRQYQAEGRLVAMTGDGTNDAPALAQADVAVAMNSGTQAAKEAGNMVDLDSNPTKLIEVVHIGKQMLMTRGSLTTFSIANDVAKYFAIIPAAFAATYPQLNALNVMGLHSPNSAILSAVIFNALIIIFLIPLALKGVSYKPLSASAMLRRNLWIYGLGGLVVPFIGIKVIDVLLTLLGLA.

The next 4 membrane-spanning stretches (helical) occupy residues 34–54, 58–78, 219–239, and 254–274; these read PVMFVVWAGSVLTTLLTLAMV, IAGSALFTGIISLWLWFTVLF, IALTILLIALTIVFLLATATL, and VLVALLVCLIPTTIGGLLSAI. The 4-aspartylphosphate intermediate role is filled by Asp-307. ATP is bound by residues Asp-344, Glu-348, 377-384, and Lys-395; that span reads FTAQSRMS. Mg(2+)-binding residues include Asp-518 and Asp-522. 3 consecutive transmembrane segments (helical) span residues 588–608, 616–636, and 662–682; these read FAIIPAAFAATYPQLNALNVM, AILSAVIFNALIIIFLIPLAL, and LVVPFIGIKVIDVLLTLLGLA.

This sequence belongs to the cation transport ATPase (P-type) (TC 3.A.3) family. Type IA subfamily. The system is composed of three essential subunits: KdpA, KdpB and KdpC.

The protein localises to the cell inner membrane. It carries out the reaction K(+)(out) + ATP + H2O = K(+)(in) + ADP + phosphate + H(+). In terms of biological role, part of the high-affinity ATP-driven potassium transport (or Kdp) system, which catalyzes the hydrolysis of ATP coupled with the electrogenic transport of potassium into the cytoplasm. This subunit is responsible for energy coupling to the transport system and for the release of the potassium ions to the cytoplasm. The sequence is that of Potassium-transporting ATPase ATP-binding subunit from Salmonella enteritidis PT4 (strain P125109).